Reading from the N-terminus, the 439-residue chain is Thymidine phosphorylase (439 aa).

It belongs to the thymidine/pyrimidine-nucleoside phosphorylase family. In terms of assembly, homodimer.

It catalyses the reaction thymidine + phosphate = 2-deoxy-alpha-D-ribose 1-phosphate + thymine. It functions in the pathway pyrimidine metabolism; dTMP biosynthesis via salvage pathway; dTMP from thymine: step 1/2. In terms of biological role, the enzymes which catalyze the reversible phosphorolysis of pyrimidine nucleosides are involved in the degradation of these compounds and in their utilization as carbon and energy sources, or in the rescue of pyrimidine bases for nucleotide synthesis. This chain is Thymidine phosphorylase, found in Mesorhizobium japonicum (strain LMG 29417 / CECT 9101 / MAFF 303099) (Mesorhizobium loti (strain MAFF 303099)).